The chain runs to 170 residues: Protein-lysine myristoyltransferase HlyC (170 aa).

His-23 is a catalytic residue. Residue His-151 participates in heme binding.

It belongs to the RTX toxin acyltransferase family. In terms of assembly, monomer. In terms of processing, proteolytically cleaved by the protease systems ClpAP, ClpXP and FtsH, leading to its degradation.

The protein localises to the cytoplasm. The catalysed reaction is tetradecanoyl-[ACP] + L-lysyl-[protein] = N(6)-tetradecanoyl-L-lysyl-[protein] + holo-[ACP] + H(+). With respect to regulation, the acyltransferase activity is inhibited by heme. Its function is as follows. Protein-lysine myristoyltransferase that catalyzes myristoylation of the protoxin (HlyA) at two internal lysine residues, thereby converting it to the active toxin. In Escherichia coli, this protein is Protein-lysine myristoyltransferase HlyC.